The sequence spans 94 residues: Large ribosomal subunit protein uL23 (94 aa).

This sequence belongs to the universal ribosomal protein uL23 family. Part of the 50S ribosomal subunit. Contacts protein L29, and trigger factor when it is bound to the ribosome.

One of the early assembly proteins it binds 23S rRNA. One of the proteins that surrounds the polypeptide exit tunnel on the outside of the ribosome. Forms the main docking site for trigger factor binding to the ribosome. The chain is Large ribosomal subunit protein uL23 from Treponema pallidum (strain Nichols).